The following is a 219-amino-acid chain: Adenylate kinase (219 aa).

10–15 (GAGKGT) is a binding site for ATP. The tract at residues 30–59 (STGDMLRVAVKVGTPLGIEAKKIMDSGGLV) is NMP. AMP is bound by residues threonine 31, arginine 36, 57–59 (GLV), 85–88 (GFPR), and glutamine 92. The LID stretch occupies residues 122 to 159 (GRRTHLKSGRTYHITYNQPKVEGIDDITGEKLVQRSDD). Residues arginine 123 and 132-133 (TY) each bind ATP. AMP is bound by residues arginine 156 and arginine 167. Glycine 202 is a binding site for ATP.

The protein belongs to the adenylate kinase family. As to quaternary structure, monomer.

Its subcellular location is the cytoplasm. The enzyme catalyses AMP + ATP = 2 ADP. Its pathway is purine metabolism; AMP biosynthesis via salvage pathway; AMP from ADP: step 1/1. Its function is as follows. Catalyzes the reversible transfer of the terminal phosphate group between ATP and AMP. Plays an important role in cellular energy homeostasis and in adenine nucleotide metabolism. In Vesicomyosocius okutanii subsp. Calyptogena okutanii (strain HA), this protein is Adenylate kinase.